We begin with the raw amino-acid sequence, 260 residues long: uncharacterized protein (260 aa).

The region spanning 4–231 (LHVDHVTHTY…PKELAAMLPF (228 aa)) is the ABC transporter domain. Residue 40–47 (GPSGCGKT) participates in ATP binding.

This sequence belongs to the ABC transporter superfamily.

This is an uncharacterized protein from Bacillus subtilis (strain 168).